Consider the following 122-residue polypeptide: Large ribosomal subunit protein uL14 (122 aa).

It belongs to the universal ribosomal protein uL14 family. As to quaternary structure, part of the 50S ribosomal subunit. Forms a cluster with proteins L3 and L19. In the 70S ribosome, L14 and L19 interact and together make contacts with the 16S rRNA in bridges B5 and B8.

In terms of biological role, binds to 23S rRNA. Forms part of two intersubunit bridges in the 70S ribosome. This chain is Large ribosomal subunit protein uL14, found in Aliarcobacter butzleri (strain RM4018) (Arcobacter butzleri).